Here is a 553-residue protein sequence, read N- to C-terminus: Phosphomethylpyrimidine synthase (553 aa).

Residues asparagine 192, methionine 221, tyrosine 250, histidine 286, 306–308 (SRG), 347–350 (DGLR), and glutamate 386 contribute to the substrate site. Zn(2+) is bound at residue histidine 390. Tyrosine 413 is a substrate binding site. Zn(2+) is bound at residue histidine 454. [4Fe-4S] cluster contacts are provided by cysteine 534, cysteine 537, and cysteine 542.

This sequence belongs to the ThiC family. Homodimer. [4Fe-4S] cluster serves as cofactor.

The catalysed reaction is 5-amino-1-(5-phospho-beta-D-ribosyl)imidazole + S-adenosyl-L-methionine = 4-amino-2-methyl-5-(phosphooxymethyl)pyrimidine + CO + 5'-deoxyadenosine + formate + L-methionine + 3 H(+). Its pathway is cofactor biosynthesis; thiamine diphosphate biosynthesis. Its function is as follows. Catalyzes the synthesis of the hydroxymethylpyrimidine phosphate (HMP-P) moiety of thiamine from aminoimidazole ribotide (AIR) in a radical S-adenosyl-L-methionine (SAM)-dependent reaction. In Anaplasma marginale (strain St. Maries), this protein is Phosphomethylpyrimidine synthase.